We begin with the raw amino-acid sequence, 846 residues long: Structure-specific endonuclease subunit SLX4 (846 aa).

7 disordered regions span residues 1–20 (MTDH…VGSA), 84–111 (KAGA…AESM), 123–164 (QPAE…VKKA), 283–322 (RTSK…SKIT), 480–513 (DPTP…SSLL), 624–690 (PPNA…MGSQ), and 723–751 (TLAS…QTRA). Over residues 141–153 (KPSEKGQKSEKTA) the composition is skewed to basic and acidic residues. The span at 293-303 (LDTGTSSTSEG) shows a compositional bias: polar residues. The segment covering 306–318 (KRKQTKKAKRSAK) has biased composition (basic residues). Composition is skewed to polar residues over residues 657-680 (KEIT…SKPT) and 725-751 (ASRS…QTRA).

This sequence belongs to the SLX4 family. As to quaternary structure, forms a heterodimer with SLX1. In terms of processing, phosphorylated in response to DNA damage.

Its subcellular location is the nucleus. Regulatory subunit of the SLX1-SLX4 structure-specific endonuclease that resolves DNA secondary structures generated during DNA repair and recombination. Has endonuclease activity towards branched DNA substrates, introducing single-strand cuts in duplex DNA close to junctions with ss-DNA. This is Structure-specific endonuclease subunit SLX4 from Arthroderma otae (strain ATCC MYA-4605 / CBS 113480) (Microsporum canis).